The chain runs to 134 residues: kinetoplast-associated protein 3 (134 aa).

A propeptide spanning residues 1–10 (MLRRSPTLLR) is cleaved from the precursor. Low complexity predominate over residues 106-124 (PKAPKAAKSASSKVKTAAK). The segment at 106–134 (PKAPKAAKSASSKVKTAAKTAKKTTAARK) is disordered. Basic residues predominate over residues 125–134 (TAKKTTAARK).

This sequence belongs to the KAP family. As to quaternary structure, associates with the kinetoplast DNA network.

It localises to the mitochondrion matrix. Its subcellular location is the kinetoplast. In terms of biological role, histone H1-like DNA-binding protein involved in the organization and segregation of kinetoplast DNA (kDNA). The mitochondrial DNA of kinetoplastid protozoa consists of about 5,000 minicircles and 20 to 30 maxicircles. These circular DNAs are held together by catenation into a highly organized compact disk structure referred to as a kinetoplast DNA (kDNA) network. Binds preferentially to a specific fragment of minicircle DNA and is able to compact kDNA networks through DNA charge neutralization and condensation. The sequence is that of kinetoplast-associated protein 3 (KAP3) from Crithidia fasciculata.